Reading from the N-terminus, the 658-residue chain is Threonine--tRNA ligase (658 aa).

Residues M1–T64 form the TGS domain. A catalytic region spans residues D246–P549. Residues C343, H394, and H526 each coordinate Zn(2+).

The protein belongs to the class-II aminoacyl-tRNA synthetase family. As to quaternary structure, homodimer. It depends on Zn(2+) as a cofactor.

The protein resides in the cytoplasm. It catalyses the reaction tRNA(Thr) + L-threonine + ATP = L-threonyl-tRNA(Thr) + AMP + diphosphate + H(+). Catalyzes the attachment of threonine to tRNA(Thr) in a two-step reaction: L-threonine is first activated by ATP to form Thr-AMP and then transferred to the acceptor end of tRNA(Thr). Also edits incorrectly charged L-seryl-tRNA(Thr). The polypeptide is Threonine--tRNA ligase (Bartonella tribocorum (strain CIP 105476 / IBS 506)).